Consider the following 239-residue polypeptide: Ribosomal RNA small subunit methyltransferase G (239 aa).

Residues Gly-78, Phe-83, 129–130 (AE), and Arg-148 each bind S-adenosyl-L-methionine.

The protein belongs to the methyltransferase superfamily. RNA methyltransferase RsmG family.

Its subcellular location is the cytoplasm. Its function is as follows. Specifically methylates the N7 position of a guanine in 16S rRNA. The chain is Ribosomal RNA small subunit methyltransferase G from Alkaliphilus metalliredigens (strain QYMF).